The chain runs to 207 residues: ATP-dependent Clp protease proteolytic subunit (207 aa).

The active-site Nucleophile is serine 111. Histidine 136 is an active-site residue.

Belongs to the peptidase S14 family. In terms of assembly, fourteen ClpP subunits assemble into 2 heptameric rings which stack back to back to give a disk-like structure with a central cavity, resembling the structure of eukaryotic proteasomes.

The protein localises to the cytoplasm. It carries out the reaction Hydrolysis of proteins to small peptides in the presence of ATP and magnesium. alpha-casein is the usual test substrate. In the absence of ATP, only oligopeptides shorter than five residues are hydrolyzed (such as succinyl-Leu-Tyr-|-NHMec, and Leu-Tyr-Leu-|-Tyr-Trp, in which cleavage of the -Tyr-|-Leu- and -Tyr-|-Trp bonds also occurs).. Functionally, cleaves peptides in various proteins in a process that requires ATP hydrolysis. Has a chymotrypsin-like activity. Plays a major role in the degradation of misfolded proteins. The sequence is that of ATP-dependent Clp protease proteolytic subunit from Yersinia enterocolitica serotype O:8 / biotype 1B (strain NCTC 13174 / 8081).